The following is a 94-amino-acid chain: MNKYELVYILKSNVEEEKRNQLLDKFRGIIEADGTIENVDEWGNRRLAYEINKINEGYYTLVNFSAAADVPKELDRNLKIADEVIRHMIIRLEK.

This sequence belongs to the bacterial ribosomal protein bS6 family.

Functionally, binds together with bS18 to 16S ribosomal RNA. In Alkaliphilus oremlandii (strain OhILAs) (Clostridium oremlandii (strain OhILAs)), this protein is Small ribosomal subunit protein bS6.